The chain runs to 331 residues: Ferredoxin--NADP reductase 2 (331 aa).

FAD is bound by residues Glu-37, Gln-45, Tyr-50, Val-90, Phe-124, Asp-285, and Thr-326.

This sequence belongs to the ferredoxin--NADP reductase type 2 family. In terms of assembly, homodimer. FAD is required as a cofactor.

It carries out the reaction 2 reduced [2Fe-2S]-[ferredoxin] + NADP(+) + H(+) = 2 oxidized [2Fe-2S]-[ferredoxin] + NADPH. The sequence is that of Ferredoxin--NADP reductase 2 from Bacillus velezensis (strain DSM 23117 / BGSC 10A6 / LMG 26770 / FZB42) (Bacillus amyloliquefaciens subsp. plantarum).